A 624-amino-acid polypeptide reads, in one-letter code: FAD-dependent monooxygenase apdD (624 aa).

FAD contacts are provided by Glu-73 and Asp-359.

Belongs to the paxM FAD-dependent monooxygenase family. The cofactor is FAD.

The protein operates within secondary metabolite biosynthesis. In terms of biological role, FAD-dependent monooxygenase; part of the gene cluster that mediates the biosynthesis of aspyridones. The polyketide-amino acid backbone preaspyridone A is first assembled by the PKS-NRPS hybrid apdA. The assembly of preaspyridone A is initiated by loading of malonyl-CoA onto apdA, followed by decarboxylation to yield the acetyl starter unit. The growing polyketide chain then elongates into a tetraketide. The adpA PKS module catalyzes three Claisen condensations, as well as beta-keto processing and methylation. Alpha-methylation step during polyketide synthesis is a prerequisite and a key checkpoint for chain transfer between PKS and NRPS modules. The downstream NRPS module contains the condensation (C), adenylation (A), and thiolation (T) domains and catalyzes the incorporation of tyrosine via the formation of the L-tyrosinyl-thioester and the amide linkage between L-tyrosinyl-thioester and the tetraketide. The bimodular assembly line is terminated with a reductase (R) domain that facilitates formation and release of the tetramic acid product. Because apdA lacks a designated enoylreductase (ER) domain, the required activity is provided the enoyl reductase apdC. ApdC appears to operate with different stereoselectivity in different PKS cycle. Combined with apdC, apdA is proposed to synthesize preaspyridone A via about 20 enzymatic steps. A number of oxidative steps performed successively by the cytochrome P450 monooxygenases apdE and apdB are required for the conversion of preaspyridone A to aspyridone A. The cytochrome P450 monooxygenase apdE is responsible for the oxidative dephenylation of preaspyridone A. Finally, the predicted FAD-dependent monooxygenase apdD and the acyl-CoA dehydrogenase apdG may be involved in the transformation of aspyridone A into aspyridone B. This is FAD-dependent monooxygenase apdD from Emericella nidulans (strain FGSC A4 / ATCC 38163 / CBS 112.46 / NRRL 194 / M139) (Aspergillus nidulans).